Consider the following 93-residue polypeptide: uncharacterized protein (93 aa).

2 helical membrane-spanning segments follow: residues 8–28 (FIGIVKDILVLIASFGILLAS) and 54–74 (ACFLIFIALGETLLAFVYLIL).

The protein localises to the cell membrane. This is an uncharacterized protein from Methanocaldococcus jannaschii (strain ATCC 43067 / DSM 2661 / JAL-1 / JCM 10045 / NBRC 100440) (Methanococcus jannaschii).